A 142-amino-acid chain; its full sequence is Coactosin-like protein (142 aa).

Ala-2 carries the post-translational modification N-acetylalanine. Positions 2-130 (ATKIDKEACR…EEDFIKNELK (129 aa)) constitute an ADF-H domain. Positions 66 to 75 (TGDAMSKRSK) are flexible and important for F-actin binding. N6-acetyllysine occurs at positions 102 and 126.

Belongs to the actin-binding proteins ADF family. Coactosin subfamily. Interacts with 5-lipoxygenase (ALOX5/5LO) in a calcium-independent manner. Binds to F-actin with a stoichiometry of 1:2.

Its subcellular location is the cytoplasm. The protein resides in the cytoskeleton. It localises to the nucleus. Its function is as follows. Binds to F-actin in a calcium-independent manner. Has no direct effect on actin depolymerization. Acts as a chaperone for ALOX5 (5LO), influencing both its stability and activity in leukotrienes synthesis. In Bos taurus (Bovine), this protein is Coactosin-like protein (COTL1).